A 1843-amino-acid polypeptide reads, in one-letter code: Nonribosomal peptide synthetase SIDD (1843 aa).

The interval 1 to 83 (MLSIDDHGGG…QQQQQQQQRS (83 aa)) is disordered. The span at 65–81 (QQQQQQQQQQQQQQQQQ) shows a compositional bias: low complexity. Residues 133-528 (TYSELEHLST…TEVEHHIQTC (396 aa)) form an adenylation 1 region. The interval 628-647 (KLGATHADEGPQEEPETDAE) is disordered. Residues 641-716 (EPETDAEKKL…AMANKSTSIS (76 aa)) enclose the Carrier 1 domain. Residue serine 677 is modified to O-(pantetheine 4'-phosphoryl)serine. A condensation 1 region spans residues 753 to 1175 (VEDVYPCTPL…ALSDDDAAAL (423 aa)). Positions 1289–1365 (SATSQRQRRL…EMAAVMECTD (77 aa)) constitute a Carrier 2 domain. Serine 1326 carries the O-(pantetheine 4'-phosphoryl)serine modification. Residues 1447–1734 (FFDGPVDLRR…LREIAENCGL (288 aa)) form a condensation 2 region.

This sequence belongs to the NRP synthetase family. Pantetheine 4'-phosphate serves as cofactor.

It functions in the pathway siderophore biosynthesis. Functionally, nonribosomal peptide synthetase; part of the gene cluster that mediates the biosynthesis of at least 11 siderophores, including beauverichelin A, dimerumic acid (DA), Na-dimethyl coprogen (NADC), eleutherazine B, ferricrocin (FC), fusarinine A, fusarinine C (FsC), metachelin A, mevalonolactone, rhodotorulic acid (RA) and tenellin. This cocktail of siderophores for iron metabolism is essential for virulence, and more specifically for the fungal virulence in penetrating through the host cuticle. Siderophore synthesis is also involved in conidial germination under iron-deficient conditions. SIDC catalyzes the assembly of ferricrocin whereas SIDD catalyzes the assembly of fusarinine C. This Beauveria bassiana (strain ARSEF 2860) (White muscardine disease fungus) protein is Nonribosomal peptide synthetase SIDD.